The sequence spans 344 residues: D-beta-hydroxybutyrate dehydrogenase, mitochondrial (344 aa).

Residues 1-46 (MLTARLSRPLSQLPRKTLNFSDRENGTRGSLLLYSAPFVPVGRRTY) constitute a mitochondrion transit peptide. 59–83 (LITGCDSGFGFSLAKHLHSEGFLVF) is a binding site for NAD(+). K73 and K97 each carry N6-acetyllysine. At K103 the chain carries N6-acetyllysine; alternate. K103 bears the N6-succinyllysine; alternate mark. The residue at position 177 (K177) is an N6-acetyllysine. S195 serves as a coordination point for substrate. Residue Y208 is the Proton acceptor of the active site. K212 is modified (N6-acetyllysine). O-linked (GlcNAc) serine glycosylation occurs at S219. S246 carries the post-translational modification Phosphoserine. The residue at position 260 (K260) is an N6-acetyllysine; alternate. K260 is subject to N6-succinyllysine; alternate. At K281 the chain carries N6-acetyllysine.

The protein belongs to the short-chain dehydrogenases/reductases (SDR) family. In terms of assembly, homotetramer.

It is found in the mitochondrion inner membrane. The protein localises to the mitochondrion matrix. The enzyme catalyses (R)-3-hydroxybutanoate + NAD(+) = acetoacetate + NADH + H(+). Its activity is regulated as follows. Requires phosphatidylcholine as an allosteric activator for enzymatic activity. The protein is D-beta-hydroxybutyrate dehydrogenase, mitochondrial of Bos taurus (Bovine).